Consider the following 147-residue polypeptide: Phosphoribosyl-AMP cyclohydrolase 2 (147 aa).

Residue aspartate 99 coordinates Mg(2+). Residue cysteine 100 participates in Zn(2+) binding. The Mg(2+) site is built by aspartate 101 and aspartate 103. 2 residues coordinate Zn(2+): cysteine 116 and cysteine 123.

This sequence belongs to the PRA-CH family. As to quaternary structure, homodimer. It depends on Mg(2+) as a cofactor. Zn(2+) serves as cofactor.

The protein resides in the cytoplasm. It catalyses the reaction 1-(5-phospho-beta-D-ribosyl)-5'-AMP + H2O = 1-(5-phospho-beta-D-ribosyl)-5-[(5-phospho-beta-D-ribosylamino)methylideneamino]imidazole-4-carboxamide. It functions in the pathway amino-acid biosynthesis; L-histidine biosynthesis; L-histidine from 5-phospho-alpha-D-ribose 1-diphosphate: step 3/9. In terms of biological role, catalyzes the hydrolysis of the adenine ring of phosphoribosyl-AMP. The sequence is that of Phosphoribosyl-AMP cyclohydrolase 2 from Pseudomonas fluorescens (strain ATCC BAA-477 / NRRL B-23932 / Pf-5).